We begin with the raw amino-acid sequence, 59 residues long: MAGQIKVTLKKSGIGRKEYFTKVLKGLGLTKLHKTVVLTDTPEIRGMIRKVSHMVVVED.

It belongs to the universal ribosomal protein uL30 family. Part of the 50S ribosomal subunit.

This chain is Large ribosomal subunit protein uL30, found in Syntrophotalea carbinolica (strain DSM 2380 / NBRC 103641 / GraBd1) (Pelobacter carbinolicus).